Reading from the N-terminus, the 262-residue chain is 5'-nucleotidase SurE (262 aa).

Residues Asp11, Asp12, Ser43, and Asn101 each contribute to the a divalent metal cation site. The segment covering 220–229 (SAGDGPKEWP) has biased composition (basic and acidic residues). The tract at residues 220 to 246 (SAGDGPKEWPSDVSQIETNSPSLTPIQ) is disordered. The segment covering 231–244 (DVSQIETNSPSLTP) has biased composition (polar residues).

Belongs to the SurE nucleotidase family. It depends on a divalent metal cation as a cofactor.

It localises to the cytoplasm. It catalyses the reaction a ribonucleoside 5'-phosphate + H2O = a ribonucleoside + phosphate. In terms of biological role, nucleotidase that shows phosphatase activity on nucleoside 5'-monophosphates. This Prochlorococcus marinus (strain SARG / CCMP1375 / SS120) protein is 5'-nucleotidase SurE.